A 257-amino-acid chain; its full sequence is tRNA pseudouridine synthase A (257 aa).

The active-site Nucleophile is Asp-53. Tyr-111 is a binding site for substrate.

It belongs to the tRNA pseudouridine synthase TruA family. Homodimer.

It catalyses the reaction uridine(38/39/40) in tRNA = pseudouridine(38/39/40) in tRNA. In terms of biological role, formation of pseudouridine at positions 38, 39 and 40 in the anticodon stem and loop of transfer RNAs. The sequence is that of tRNA pseudouridine synthase A from Xanthomonas axonopodis pv. citri (strain 306).